The sequence spans 141 residues: VLSPADKTNVKAAWEKVGGHAGDYGAEALERMFLSFPTTKTYFPHFDLSHGSSQVKGHGKKVGDALGNAVAHMDDLPGALSALSDLHAYKLRVDPVNFKLLSHCLLVTLASHHAADFTPAVHASLDKFLASVSTVLTSKYR.

Residues 1 to 141 (VLSPADKTNV…VSTVLTSKYR (141 aa)) form the Globin domain. At S3 the chain carries Phosphoserine. K7 is modified (N6-succinyllysine). T8 carries the phosphothreonine modification. Position 11 is an N6-succinyllysine (K11). The residue at position 16 (K16) is an N6-acetyllysine; alternate. At K16 the chain carries N6-succinyllysine; alternate. Y24 carries the phosphotyrosine modification. At S35 the chain carries Phosphoserine. At K40 the chain carries N6-succinyllysine. A Phosphoserine modification is found at S49. Residue H58 participates in O2 binding. H87 provides a ligand contact to heme b. S102 bears the Phosphoserine mark. T108 is modified (phosphothreonine). Residues S124 and S131 each carry the phosphoserine modification. Residues T134 and T137 each carry the phosphothreonine modification. S138 bears the Phosphoserine mark.

This sequence belongs to the globin family. As to quaternary structure, heterotetramer of two alpha chains and two beta chains. As to expression, red blood cells.

In terms of biological role, involved in oxygen transport from the lung to the various peripheral tissues. Functionally, hemopressin acts as an antagonist peptide of the cannabinoid receptor CNR1. Hemopressin-binding efficiently blocks cannabinoid receptor CNR1 and subsequent signaling. The sequence is that of Hemoglobin subunit alpha (HBA) from Taphozous georgianus (Sharp-nosed tomb bat).